We begin with the raw amino-acid sequence, 153 residues long: Ribosome maturation factor RimP (153 aa).

This sequence belongs to the RimP family.

The protein resides in the cytoplasm. Functionally, required for maturation of 30S ribosomal subunits. The protein is Ribosome maturation factor RimP of Clostridium botulinum (strain Kyoto / Type A2).